A 253-amino-acid polypeptide reads, in one-letter code: uncharacterized protein (253 aa).

In terms of domain architecture, BON 1 spans 4 to 73 (FGKSTADRVK…IDVSGVTVLQ (70 aa)). Over residues 79 to 93 (AAQTAPTTPAQTSPS) the composition is skewed to low complexity. A disordered region spans residues 79-105 (AAQTAPTTPAQTSPSVQDSPSTPVQMP). Positions 119–188 (DTSRIAKAVL…VDISGLRVAQ (70 aa)) constitute a BON 2 domain. Residues 204 to 251 (TVYTVKPGDSLSKIAEHYYGDQMEYKKIAHYNNISNPDLIQPGQKLRI) form the LysM domain.

This is an uncharacterized protein from Deinococcus radiodurans (strain ATCC 13939 / DSM 20539 / JCM 16871 / CCUG 27074 / LMG 4051 / NBRC 15346 / NCIMB 9279 / VKM B-1422 / R1).